We begin with the raw amino-acid sequence, 761 residues long: Protein spire homolog 1 (761 aa).

Disordered regions lie at residues 1 to 23 (MTDG…ARPE) and 160 to 183 (DCPD…AEVS). Positions 36–223 (LCLEEILTLY…RALYAETKEL (188 aa)) constitute a KIND domain. Positions 160 to 180 (DCPDEGYEATEEEDEGEEENA) are enriched in acidic residues. Positions 218-246 (AETKELRTFLEKIKSAKENLRKMEGETEE) form a coiled coil. WH2 domains follow at residues 295-313 (PYEM…LRKV) and 359-376 (LHER…LRPV). Disordered regions lie at residues 375–406 (PVSP…DIPD) and 419–539 (ANGT…KSLA). Low complexity predominate over residues 469–480 (SSSSISTSLVED). Basic and acidic residues predominate over residues 504-520 (PDKRIAPQRRHSIEKEA). Residues 557–577 (LTLTVEEVMHIRQVLVKAELE) form a spir-box region. Disordered stretches follow at residues 630-694 (PSKP…DELE) and 728-761 (STKR…IKEV). Positions 636 to 647 (SLPISSLGPSIL) are enriched in low complexity. Residues 682–693 (KHGDRSSSKDEL) are compositionally biased toward basic and acidic residues. Residues 728 to 739 (STKRARLHRRTH) show a composition bias toward basic residues. Residues 740 to 749 (SVYSSSTSSS) show a composition bias toward low complexity.

It belongs to the spire family.

The protein resides in the cytoplasm. It localises to the cytoskeleton. Its subcellular location is the cytosol. The protein localises to the cleavage furrow. It is found in the perinuclear region. The protein resides in the cell membrane. It localises to the cytoplasmic vesicle membrane. In terms of biological role, acts as an actin nucleation factor, remains associated with the slow-growing pointed end of the new filament. Involved in intracellular vesicle transport along actin fibers, providing a novel link between actin cytoskeleton dynamics and intracellular transport. Required for asymmetric spindle positioning and asymmetric cell division during meiosis. Required for normal formation of the cleavage furrow and for polar body extrusion during female germ cell meiosis. Also acts in the nucleus: together with FMN2, promotes assembly of nuclear actin filaments in response to DNA damage in order to facilitate movement of chromatin and repair factors after DNA damage. In addition, promotes innate immune signaling downstream of dsRNA sensing. Mechanistically, contributes to IRF3 phosphorylation and activation downstream of MAVS and upstream of TBK1. This is Protein spire homolog 1 from Danio rerio (Zebrafish).